The chain runs to 54 residues: MNWKTILIYLLIFVAGIVIGKIRINVKMNKGSCPRDLIDKYKQQLNDSESSDYL.

A helical membrane pass occupies residues 6–26 (ILIYLLIFVAGIVIGKIRINV).

It is found in the host membrane. This is an uncharacterized protein from Acidianus convivator (ABV).